A 124-amino-acid polypeptide reads, in one-letter code: Large ribosomal subunit protein eL22z (124 aa).

The protein belongs to the eukaryotic ribosomal protein eL22 family.

The protein is Large ribosomal subunit protein eL22z (RPL22B) of Arabidopsis thaliana (Mouse-ear cress).